Here is a 391-residue protein sequence, read N- to C-terminus: Multidrug resistance protein MdtL (391 aa).

The Cytoplasmic segment spans residues 1 to 3; it reads MSR. A helical membrane pass occupies residues 4–24; sequence FLICSFALVLLYPAGIDMYLV. The Periplasmic segment spans residues 25–41; that stretch reads GLPRIAADLNASEAQLH. A helical transmembrane segment spans residues 42–62; the sequence is IAFSVYLAGMAAAMLFAGKVA. The Cytoplasmic segment spans residues 63-68; it reads DRSGRK. A helical transmembrane segment spans residues 69–89; it reads PVAIPGAALFIIASVFCSLAE. Residues 90–92 lie on the Periplasmic side of the membrane; it reads TSA. A helical transmembrane segment spans residues 93–113; that stretch reads LFLAGRFLQGLGAGCCYVVAF. The Cytoplasmic segment spans residues 114 to 130; sequence AILRDTLDDRRRAKVLS. The helical transmembrane segment at 131-151 threads the bilayer; that stretch reads LLNGITCIIPVLAPVLGHLIM. Over 152-157 the chain is Periplasmic; the sequence is LKFPWQ. Residues 158–178 form a helical membrane-spanning segment; it reads SLFWTMATMGIAVLMLSLFIL. Topologically, residues 179 to 202 are cytoplasmic; sequence KETRPAAPAASDKPRENSESLLNR. Residues 203-222 form a helical membrane-spanning segment; it reads FFLSRVVITTLSVSVILTFV. The Periplasmic portion of the chain corresponds to 223-244; the sequence is NTSPVLLMEIMGFERGEYATIM. The helical transmembrane segment at 245–265 threads the bilayer; the sequence is ALTAGVSMTVSFSTPFALGIF. The Cytoplasmic portion of the chain corresponds to 266–268; the sequence is KPR. A helical membrane pass occupies residues 269 to 289; that stretch reads TLMITSQVLFLAAGITLAVSP. Residues 290 to 292 lie on the Periplasmic side of the membrane; the sequence is SHA. Residues 293 to 313 form a helical membrane-spanning segment; the sequence is VSLFGITLICAGFSVGFGVAM. Topologically, residues 314–330 are cytoplasmic; it reads SQALGPFSLRAGVASST. Residues 331 to 351 traverse the membrane as a helical segment; that stretch reads LGIAQVCGSSLWIWLAAVVGI. At 352–355 the chain is on the periplasmic side; it reads GAWN. The helical transmembrane segment at 356-376 threads the bilayer; that stretch reads MLIGILIACSIVSLLLIMFVA. Over 377–391 the chain is Cytoplasmic; sequence PGRPVAAHEEIHHHA.

This sequence belongs to the major facilitator superfamily. DHA1 family. MdtL (TC 2.A.1.2.22) subfamily.

It is found in the cell inner membrane. Confers resistance to chloramphenicol. This is Multidrug resistance protein MdtL from Escherichia coli O6:K15:H31 (strain 536 / UPEC).